We begin with the raw amino-acid sequence, 633 residues long: Putative serine/threonine-protein kinase L232 (633 aa).

Residues 10–314 (YTIVDKLSEG…QSRKLFYEIL (305 aa)) form the Protein kinase domain. ATP contacts are provided by residues 16–24 (LSEGTYGIV) and K39. The active-site Proton acceptor is D133.

It belongs to the protein kinase superfamily. Ser/Thr protein kinase family.

The catalysed reaction is L-seryl-[protein] + ATP = O-phospho-L-seryl-[protein] + ADP + H(+). The enzyme catalyses L-threonyl-[protein] + ATP = O-phospho-L-threonyl-[protein] + ADP + H(+). The protein is Putative serine/threonine-protein kinase L232 of Acanthamoeba polyphaga mimivirus (APMV).